Here is a 204-residue protein sequence, read N- to C-terminus: Synaptosomal-associated protein 25-A (204 aa).

Residues 1–11 (MAEDSDMRNEL) show a composition bias toward basic and acidic residues. Residues 1–25 (MAEDSDMRNELADMQQRADQLADES) are disordered. T-SNARE coiled-coil homology domains are found at residues 19 to 81 (DQLA…LNDL) and 138 to 200 (DARE…ATKM).

The protein belongs to the SNAP-25 family. As to expression, expressed in several regions throughout the adult brain, including the mesencephalon.

The protein localises to the synapse. It is found in the synaptosome. The protein resides in the cell membrane. Functionally, may play an important role in the synaptic function of specific neuronal systems. Associates with proteins involved in vesicle docking and membrane fusion. The protein is Synaptosomal-associated protein 25-A of Danio rerio (Zebrafish).